A 650-amino-acid polypeptide reads, in one-letter code: Probable E3 ubiquitin ligase complex SCF subunit scon-2 (650 aa).

In terms of domain architecture, F-box spans 124–170; the sequence is IDFISALPVELAQKVLCYLDTVSLTKAAQVSQRWRTLADSDAVWVRM. Residues 200–244 are disordered; sequence QRQLAKGGPQGRVTELADSHDSQDRSVNQHGKRPAAEAEEEDPIK. Basic and acidic residues predominate over residues 214–223; it reads ELADSHDSQD. WD repeat units lie at residues 292–320, 332–360, 372–400, 411–441, and 453–488; these read GHENGVTCLQLDDNILATGSYDTTIKIWN, GHTAGIRALQFDDSKLISGSLDHTIKVWN, AHTDSVISVHFDGHLLASGSSDKTVKIFD, GHSDWVNSTHVDIKSRTVFSASDDTTIKLWD, and GHVGHVQQVLILPPEYEPDEEVLNGASQDNQDAMSV. Residues 482-525 are disordered; the sequence is NQDAMSVSSGGSGSPSMSHAQIERAGSPGSHSSSHNLLPSSLPS. 2 stretches are compositionally biased toward low complexity: residues 487–499 and 507–525; these read SVSSGGSGSPSMS and GSPGSHSSSHNLLPSSLPS. WD repeat units lie at residues 528–564, 576–604, and 616–644; these read EDVRHLYGSAFVADESRPLPPRYFMTGGLDSTMRLWD, GHLEGVWSLAGDTIRVISGANDGMVKTWE, and GHCGPVTCVGLSDSLMASGSEDGTIRLHS.

It belongs to the WD repeat MET30/SCONB/SCON-2 family. Component of the SCF(scon-2) E3 ubiquitin ligase complex.

The protein operates within protein modification; protein ubiquitination. Functionally, component of the SCF(scon-2) E3 ubiquitin ligase complex involved in the regulation of sulfur metabolite repression, probably by mediating the inactivation or degradation of the metR transcription factor. The chain is Probable E3 ubiquitin ligase complex SCF subunit scon-2 (scon-2) from Neurospora crassa (strain ATCC 24698 / 74-OR23-1A / CBS 708.71 / DSM 1257 / FGSC 987).